Here is a 117-residue protein sequence, read N- to C-terminus: Translation initiation factor 1A (117 aa).

In terms of domain architecture, S1-like spans Ile-17–Thr-92.

It belongs to the eIF-1A family.

Its function is as follows. Seems to be required for maximal rate of protein biosynthesis. Enhances ribosome dissociation into subunits and stabilizes the binding of the initiator Met-tRNA(I) to 40 S ribosomal subunits. The sequence is that of Translation initiation factor 1A from Thermococcus kodakarensis (strain ATCC BAA-918 / JCM 12380 / KOD1) (Pyrococcus kodakaraensis (strain KOD1)).